We begin with the raw amino-acid sequence, 179 residues long: Inosine/xanthosine triphosphatase (179 aa).

Residue E71 participates in Mg(2+) binding. 71–72 (EA) contributes to the substrate binding site.

It belongs to the YjjX NTPase family. As to quaternary structure, homodimer. The cofactor is Mg(2+). Requires Mn(2+) as cofactor.

It catalyses the reaction XTP + H2O = XDP + phosphate + H(+). It carries out the reaction ITP + H2O = IDP + phosphate + H(+). In terms of biological role, phosphatase that hydrolyzes non-canonical purine nucleotides such as XTP and ITP to their respective diphosphate derivatives. Probably excludes non-canonical purines from DNA/RNA precursor pool, thus preventing their incorporation into DNA/RNA and avoiding chromosomal lesions. The sequence is that of Inosine/xanthosine triphosphatase from Shewanella sp. (strain ANA-3).